A 474-amino-acid chain; its full sequence is Protein U79/U80 (474 aa).

2 stretches are compositionally biased toward basic and acidic residues: residues 156–165 (DRKKHDDEHR) and 175–219 (RKVE…KRQK). Disordered stretches follow at residues 156–219 (DRKK…KRQK) and 412–441 (SGQN…SRTQ). Over residues 417 to 432 (GRARGRGRGRAPRRRN) the composition is skewed to basic residues.

Belongs to the herpesviridae U79/UL112 family.

It is found in the host nucleus. May be involved in DNA replication. This chain is Protein U79/U80 (U79/U80), found in Homo sapiens (Human).